The primary structure comprises 250 residues: MYKLVLMRHGESQWNLENRFTGWTDVDLTETGREQARKAGELLKKEGYQFDLAYTSVLKRAIRTLWIALDAMDAMYTPVGISWRLNERHYGNLQGLNKAETAAKYGDEQVLIWRRAYAIAPEPLPLDDERHPRFDSRYAKIPADQLPATECLQDTVARVLPYWNDSIAPAIRAGRRVLVAAHGNSLRALIKHLDNISDDDIVGLNIPTGQPLVYELDEALRPIRHYYLGDAAEIEAAMAAVAAQGKAKKD.

Substrate contacts are provided by residues 8 to 15 (RHGESQWN), 21 to 22 (TG), R60, 87 to 90 (ERHY), K98, 114 to 115 (RR), and 183 to 184 (GN). Residue H9 is the Tele-phosphohistidine intermediate of the active site. E87 functions as the Proton donor/acceptor in the catalytic mechanism.

It belongs to the phosphoglycerate mutase family. BPG-dependent PGAM subfamily. In terms of assembly, homodimer.

The catalysed reaction is (2R)-2-phosphoglycerate = (2R)-3-phosphoglycerate. Its pathway is carbohydrate degradation; glycolysis; pyruvate from D-glyceraldehyde 3-phosphate: step 3/5. Catalyzes the interconversion of 2-phosphoglycerate and 3-phosphoglycerate. This chain is 2,3-bisphosphoglycerate-dependent phosphoglycerate mutase, found in Bordetella petrii (strain ATCC BAA-461 / DSM 12804 / CCUG 43448).